A 367-amino-acid polypeptide reads, in one-letter code: Cyclin-D5-1 (367 aa).

Residues 307–333 (QPTSPASKSTTTTTGKRSSSSSCSEST) are disordered.

Belongs to the cyclin family. Cyclin D subfamily.

The sequence is that of Cyclin-D5-1 (CYCD5-1) from Oryza sativa subsp. japonica (Rice).